Here is a 419-residue protein sequence, read N- to C-terminus: Gamma-glutamyl phosphate reductase (419 aa).

This sequence belongs to the gamma-glutamyl phosphate reductase family.

It localises to the cytoplasm. It carries out the reaction L-glutamate 5-semialdehyde + phosphate + NADP(+) = L-glutamyl 5-phosphate + NADPH + H(+). The protein operates within amino-acid biosynthesis; L-proline biosynthesis; L-glutamate 5-semialdehyde from L-glutamate: step 2/2. Catalyzes the NADPH-dependent reduction of L-glutamate 5-phosphate into L-glutamate 5-semialdehyde and phosphate. The product spontaneously undergoes cyclization to form 1-pyrroline-5-carboxylate. In Bordetella avium (strain 197N), this protein is Gamma-glutamyl phosphate reductase.